A 339-amino-acid chain; its full sequence is Phosphate acyltransferase (339 aa).

The protein belongs to the PlsX family. Homodimer. Probably interacts with PlsY.

The protein localises to the cytoplasm. The enzyme catalyses a fatty acyl-[ACP] + phosphate = an acyl phosphate + holo-[ACP]. The protein operates within lipid metabolism; phospholipid metabolism. Functionally, catalyzes the reversible formation of acyl-phosphate (acyl-PO(4)) from acyl-[acyl-carrier-protein] (acyl-ACP). This enzyme utilizes acyl-ACP as fatty acyl donor, but not acyl-CoA. The protein is Phosphate acyltransferase of Aeromonas salmonicida (strain A449).